Here is a 511-residue protein sequence, read N- to C-terminus: Lysine--tRNA ligase (511 aa).

The Mg(2+) site is built by glutamate 421 and glutamate 428.

It belongs to the class-II aminoacyl-tRNA synthetase family. As to quaternary structure, homodimer. Mg(2+) serves as cofactor.

The protein localises to the cytoplasm. The catalysed reaction is tRNA(Lys) + L-lysine + ATP = L-lysyl-tRNA(Lys) + AMP + diphosphate. The chain is Lysine--tRNA ligase from Herminiimonas arsenicoxydans.